We begin with the raw amino-acid sequence, 244 residues long: Robin (244 aa).

The polypeptide is Robin (Acanthamoeba polyphaga (Amoeba)).